The chain runs to 228 residues: Thermonuclease (228 aa).

An N-terminal signal peptide occupies residues 1 to 23; the sequence is MTEYLLSAGICMAIVSILLIGMA. Residues 24–60 constitute a propeptide that is removed on maturation; that stretch reads ISNVSKGQYAKRFFFFATSCLVLTLVVVSSLSSSANA. D100 is a Ca(2+) binding site. The active site involves R114. The Ca(2+) site is built by D119 and T120. Catalysis depends on residues E122 and R166.

It belongs to the thermonuclease family. Ca(2+) serves as cofactor.

Its subcellular location is the secreted. It catalyses the reaction Endonucleolytic cleavage to nucleoside 3'-phosphates and 3'-phosphooligonucleotide end-products.. Its function is as follows. Enzyme that catalyzes the hydrolysis of both DNA and RNA at the 5' position of the phosphodiester bond. The polypeptide is Thermonuclease (nuc) (Staphylococcus aureus (strain MSSA476)).